The primary structure comprises 598 residues: MDISRLRNFSIIAHIDHGKSTLADRLLEFTGALSQREMQNQFLDKMDLERERGITIKAQTVRLTYRADDGNDYVLNLIDTPGHVDFTYEVSRSLAACEGGLLVVDASQGVEAQTLANVYLALDINLEVFPVLNKIDLPAADPERVIQEIEEIIGIDAHDAVLASAKEGIGTHEILEEIVKKIPPPKGDASAPLRALLFDSWYDQYQGVIILVRIFDGTLKKGDRIQLMATRSSFEALKVGVFAPTMVETQQLAAGEVGFVIAGIKEVADAKVGDTVTLQHRPCSSALEGFKEVKPMVFSGLYPIDTVQYEQLRDALAKLKLNDSSFSYDPETSLALGFGFRCGFLGLLHMEIIQERLEREFGLDLITTAPTVVYRVHRVTGEVQSIESANQMPELQHVEYLEEPFILAHIHVPNEFVGGVLALCEDKRGVQREIKYLTQNRVMIIYELPLNEIVLDFYDRLKSITKGYASLDYEHLDYRKSDLVRMNVMINGEVVDALSLILHRDKAYYRGRDLVSKMKELIPRQMFEVAIQAAIGNKIIARETVKAMRKDVLAKCYGGDITRKRKLLEKQKEGKKRMKNVGNVELPQDAFLAILKVE.

Positions 4 to 186 constitute a tr-type G domain; it reads SRLRNFSIIA…EIVKKIPPPK (183 aa). Residues 16 to 21 and 133 to 136 contribute to the GTP site; these read DHGKST and NKID.

The protein belongs to the TRAFAC class translation factor GTPase superfamily. Classic translation factor GTPase family. LepA subfamily.

It localises to the cell inner membrane. It catalyses the reaction GTP + H2O = GDP + phosphate + H(+). In terms of biological role, required for accurate and efficient protein synthesis under certain stress conditions. May act as a fidelity factor of the translation reaction, by catalyzing a one-codon backward translocation of tRNAs on improperly translocated ribosomes. Back-translocation proceeds from a post-translocation (POST) complex to a pre-translocation (PRE) complex, thus giving elongation factor G a second chance to translocate the tRNAs correctly. Binds to ribosomes in a GTP-dependent manner. The protein is Elongation factor 4 of Pelobacter propionicus (strain DSM 2379 / NBRC 103807 / OttBd1).